The sequence spans 271 residues: MLATSDLWFRYQDEPVLKGLNLDFSLSPVTGLVGANGCGKSTLFMNLSGLLRPQKGAVLWQGKPLDYSKRGLLALRQQVATVFQDPEQQIFYTDIDSDIAFSLRNLGVPEAEITRRVDEALTLVDAQHFRHQPIQCLSHGQKKRVAIAGALVLQARYLLLDEPTAGLDPAGRTQMIAIIRRIVAQGNHVIISSHDIDLIYEISDAVYVLRQGQILMHGAPGEVFACTEAMEHAGLTQPWLVKLHTQLGLPLCKTETEFFHRMQKCAFREAS.

Residues 2–236 (LATSDLWFRY…TEAMEHAGLT (235 aa)) form the ABC transporter domain. An ATP-binding site is contributed by 34-41 (GANGCGKS).

It belongs to the ABC transporter superfamily. Cobalt importer (TC 3.A.1.18.1) family. As to quaternary structure, forms an energy-coupling factor (ECF) transporter complex composed of an ATP-binding protein (A component, CbiO), a transmembrane protein (T component, CbiQ) and 2 possible substrate-capture proteins (S components, CbiM and CbiN) of unknown stoichimetry.

It is found in the cell inner membrane. It functions in the pathway cofactor biosynthesis; adenosylcobalamin biosynthesis. Part of the energy-coupling factor (ECF) transporter complex CbiMNOQ involved in cobalt import. Presumably responsible for energy coupling to the transport system. The protein is Cobalt import ATP-binding protein CbiO of Salmonella typhi.